A 286-amino-acid polypeptide reads, in one-letter code: ATP synthase gamma chain (286 aa).

This sequence belongs to the ATPase gamma chain family. In terms of assembly, F-type ATPases have 2 components, CF(1) - the catalytic core - and CF(0) - the membrane proton channel. CF(1) has five subunits: alpha(3), beta(3), gamma(1), delta(1), epsilon(1). CF(0) has three main subunits: a, b and c.

It localises to the cell inner membrane. In terms of biological role, produces ATP from ADP in the presence of a proton gradient across the membrane. The gamma chain is believed to be important in regulating ATPase activity and the flow of protons through the CF(0) complex. In Fuscovulum blasticum (Rhodobacter blasticus), this protein is ATP synthase gamma chain.